A 1038-amino-acid polypeptide reads, in one-letter code: Translation initiation factor IF-2 (1038 aa).

The disordered stretch occupies residues 32–442 (GSALASLSDE…RKGVNTAAPR (411 aa)). Composition is skewed to low complexity over residues 65–77 (PPTK…PVAP), 100–113 (PAEA…PAQP), and 131–147 (PKLA…APAA). 2 stretches are compositionally biased toward basic and acidic residues: residues 204 to 217 (SGGR…KRES) and 275 to 295 (RSLD…DAGK). Low complexity predominate over residues 311-328 (PSAPAKPAAPTGSSGPAA). The segment covering 331–344 (PDIKLTRDVIEGHK) has biased composition (basic and acidic residues). A compositionally biased stretch (basic residues) spans 422 to 435 (HHYRRSRPRIRRKG). One can recognise a tr-type G domain in the interval 529 to 696 (ARPPVVTFLG…TLLTIAELNE (168 aa)). A G1 region spans residues 538 to 545 (GHVDHGKT). Residue 538–545 (GHVDHGKT) participates in GTP binding. Residues 563 to 567 (GITQH) form a G2 region. A G3 region spans residues 584–587 (DTPG). Residues 584–588 (DTPGH) and 638–641 (NKID) each bind GTP. The tract at residues 638-641 (NKID) is G4. Residues 674 to 676 (SAT) form a G5 region.

Belongs to the TRAFAC class translation factor GTPase superfamily. Classic translation factor GTPase family. IF-2 subfamily.

The protein resides in the cytoplasm. In terms of biological role, one of the essential components for the initiation of protein synthesis. Protects formylmethionyl-tRNA from spontaneous hydrolysis and promotes its binding to the 30S ribosomal subunits. Also involved in the hydrolysis of GTP during the formation of the 70S ribosomal complex. The protein is Translation initiation factor IF-2 of Rhodopirellula baltica (strain DSM 10527 / NCIMB 13988 / SH1).